Reading from the N-terminus, the 351-residue chain is UPF0252 protein MJECL39 (351 aa).

2 consecutive transmembrane segments (helical) span residues 58–78 (FITF…VWLW) and 91–111 (IIIC…LCGV).

Belongs to the UPF0252 family.

The protein localises to the cell membrane. The protein is UPF0252 protein MJECL39 of Methanocaldococcus jannaschii (strain ATCC 43067 / DSM 2661 / JAL-1 / JCM 10045 / NBRC 100440) (Methanococcus jannaschii).